We begin with the raw amino-acid sequence, 1206 residues long: DNA-directed RNA polymerase subunit beta' (1206 aa).

Residues C60, C62, C75, and C78 each contribute to the Zn(2+) site. Mg(2+)-binding residues include D449, D451, and D453. C818, C892, C899, and C902 together coordinate Zn(2+).

The protein belongs to the RNA polymerase beta' chain family. In terms of assembly, the RNAP catalytic core consists of 2 alpha, 1 beta, 1 beta' and 1 omega subunit. When a sigma factor is associated with the core the holoenzyme is formed, which can initiate transcription. Mg(2+) is required as a cofactor. The cofactor is Zn(2+).

The catalysed reaction is RNA(n) + a ribonucleoside 5'-triphosphate = RNA(n+1) + diphosphate. Functionally, DNA-dependent RNA polymerase catalyzes the transcription of DNA into RNA using the four ribonucleoside triphosphates as substrates. This is DNA-directed RNA polymerase subunit beta' from Halalkalibacterium halodurans (strain ATCC BAA-125 / DSM 18197 / FERM 7344 / JCM 9153 / C-125) (Bacillus halodurans).